We begin with the raw amino-acid sequence, 920 residues long: Isoleucine--tRNA ligase (920 aa).

The 'HIGH' region signature appears at 58–68 (PYANGHLHLGH). Glu569 is an L-isoleucyl-5'-AMP binding site. The 'KMSKS' region motif lies at 610–614 (KMSKS). Lys613 contributes to the ATP binding site. Residues Cys895, Cys898, Cys910, and Cys913 each contribute to the Zn(2+) site.

This sequence belongs to the class-I aminoacyl-tRNA synthetase family. IleS type 1 subfamily. As to quaternary structure, monomer. Requires Zn(2+) as cofactor.

It is found in the cytoplasm. It catalyses the reaction tRNA(Ile) + L-isoleucine + ATP = L-isoleucyl-tRNA(Ile) + AMP + diphosphate. Catalyzes the attachment of isoleucine to tRNA(Ile). As IleRS can inadvertently accommodate and process structurally similar amino acids such as valine, to avoid such errors it has two additional distinct tRNA(Ile)-dependent editing activities. One activity is designated as 'pretransfer' editing and involves the hydrolysis of activated Val-AMP. The other activity is designated 'posttransfer' editing and involves deacylation of mischarged Val-tRNA(Ile). This Helicobacter pylori (strain HPAG1) protein is Isoleucine--tRNA ligase.